The following is a 601-amino-acid chain: Testis-specific gene 10 protein (601 aa).

Residues 1–10 are compositionally biased toward basic residues; that stretch reads MMRSRSKSPR. Disordered stretches follow at residues 1-20 and 563-588; these read MMRS…RGAN and VSST…DRGL. The segment at 459 to 592 is interaction with HIF1A; it reads QMTNERISMQ…SPDRGLDRSL (134 aa). Polar residues predominate over residues 563–573; that stretch reads VSSTMKPNTKC. Residues 574 to 588 show a composition bias toward basic and acidic residues; the sequence is HSPERAHHRSPDRGL. A Phosphoserine modification is found at Ser591.

Belongs to the CEP135/TSGA10 family. Interacts with HIF1A. Post-translationally, processed into N-terminal 27-kDa and C-terminal 55-kDa fragments.

Its subcellular location is the cytoplasm. The protein localises to the cytoskeleton. It is found in the microtubule organizing center. It localises to the centrosome. The protein resides in the centriole. Its function is as follows. Plays a role in spermatogenesis. When overexpressed, prevents nuclear localization of HIF1A. The protein is Testis-specific gene 10 protein (TSGA10) of Macaca fascicularis (Crab-eating macaque).